Here is a 122-residue protein sequence, read N- to C-terminus: Prefoldin subunit 1 (122 aa).

An N-acetylalanine modification is found at alanine 2.

Belongs to the prefoldin subunit beta family. In terms of assembly, heterohexamer of two PFD-alpha type and four PFD-beta type subunits.

Functionally, binds specifically to cytosolic chaperonin (c-CPN) and transfers target proteins to it. Binds to nascent polypeptide chain and promotes folding in an environment in which there are many competing pathways for nonnative proteins. The chain is Prefoldin subunit 1 (Pfdn1) from Mus musculus (Mouse).